The primary structure comprises 333 residues: Protein SEEDLING LETHAL 1, chloroplastic (333 aa).

The N-terminal 55 residues, 1-55 (MQQEALSFLSSSLPSLHHNFPSLSRLRFNNFPALSFKPNTSSSSSSFFKSPDIPS), are a transit peptide targeting the chloroplast. The segment at 38–67 (PNTSSSSSSFFKSPDIPSLSSTTTTTTTTE) is disordered.

This sequence belongs to the mTERF family. In terms of assembly, self-interacts. Associates with the plastid-encoded RNA polymerase (PEP) complex. Interacts directly with PTAC7/PAP12, PTAC12/HMR/PAP5 and PTAC14/PAP7. As to expression, expressed in green aerial tissues such as cotyledons, leaves, flowers and siliques, but not in roots.

Its subcellular location is the plastid. The protein localises to the chloroplast stroma. It is found in the chloroplast nucleoid. Its function is as follows. Transcription termination factor required for chloroplast gene expression and protein synthesis in chloroplasts. Necessary for chloroplast photosynthetic complexes assembly by modulating the accumulation of photosynthetic proteins. Essential for embryogenesis. The polypeptide is Protein SEEDLING LETHAL 1, chloroplastic (Arabidopsis thaliana (Mouse-ear cress)).